We begin with the raw amino-acid sequence, 429 residues long: Enolase (429 aa).

A (2R)-2-phosphoglycerate-binding site is contributed by Gln-163. The Proton donor role is filled by Glu-205. The Mg(2+) site is built by Asp-242, Glu-287, and Asp-314. (2R)-2-phosphoglycerate-binding residues include Lys-339, Arg-368, Ser-369, and Lys-390. The active-site Proton acceptor is Lys-339.

This sequence belongs to the enolase family. Requires Mg(2+) as cofactor.

It localises to the cytoplasm. The protein localises to the secreted. The protein resides in the cell surface. It catalyses the reaction (2R)-2-phosphoglycerate = phosphoenolpyruvate + H2O. It participates in carbohydrate degradation; glycolysis; pyruvate from D-glyceraldehyde 3-phosphate: step 4/5. Its function is as follows. Catalyzes the reversible conversion of 2-phosphoglycerate (2-PG) into phosphoenolpyruvate (PEP). It is essential for the degradation of carbohydrates via glycolysis. The sequence is that of Enolase from Anaeromyxobacter dehalogenans (strain 2CP-1 / ATCC BAA-258).